A 314-amino-acid polypeptide reads, in one-letter code: Vomeronasal type-1 receptor 98 (314 aa).

The Extracellular segment spans residues 1–19 (MNKDTTMYCSAYIRDVFFC). The chain crosses the membrane as a helical span at residues 20–40 (EIGVGISANSCLLLFHIFMFI). At 41–49 (RGHRPRLTD) the chain is on the cytoplasmic side. Residues 50-70 (LPIGLMALIHLLMLLLAAYIA) form a helical membrane-spanning segment. Topologically, residues 71–92 (KDFFMSSGWDDITCKLFIFLHR) are extracellular. Cysteine 84 and cysteine 171 form a disulfide bridge. The chain crosses the membrane as a helical span at residues 93-113 (FFRSLSVCATCMLSVFQTIIL). At 114-133 (CPQSSHLAKFKPNSPYHLSC) the chain is on the cytoplasmic side. The helical transmembrane segment at 134-154 (FFIFMSIFYTSISSHILIAAI) threads the bilayer. Residues 155-186 (ATQNLTSVNLIYITKSCSFLPMSSSMQRTFST) are Extracellular-facing. A glycan (N-linked (GlcNAc...) asparagine) is linked at asparagine 158. A helical membrane pass occupies residues 187-207 (LLAFRNAFLIGLMGLSTCYMA). Over 208–235 (TLLCRHKTRSQRLQNSKLSPKATPEQRA) the chain is Cytoplasmic. Residues 236 to 256 (IWTLLMFMSFFLVMSTFDSII) form a helical membrane-spanning segment. The Extracellular portion of the chain corresponds to 257 to 268 (SYSRTIFQGNPS). Residues 269 to 289 (LYCAQILVAHSYAVVSPMLVL) traverse the membrane as a helical segment. Residues 290 to 314 (SNENRLTNPLISMYERIVRLDFLCW) are Cytoplasmic-facing.

The protein belongs to the G-protein coupled receptor 1 family.

It localises to the cell membrane. In terms of biological role, putative pheromone receptor implicated in the regulation of social as well as reproductive behavior. The polypeptide is Vomeronasal type-1 receptor 98 (Vom1r98) (Rattus norvegicus (Rat)).